The chain runs to 169 residues: Peptide methionine sulfoxide reductase MsrA (169 aa).

Cys10 is an active-site residue.

The protein belongs to the MsrA Met sulfoxide reductase family.

It carries out the reaction L-methionyl-[protein] + [thioredoxin]-disulfide + H2O = L-methionyl-(S)-S-oxide-[protein] + [thioredoxin]-dithiol. The enzyme catalyses [thioredoxin]-disulfide + L-methionine + H2O = L-methionine (S)-S-oxide + [thioredoxin]-dithiol. Has an important function as a repair enzyme for proteins that have been inactivated by oxidation. Catalyzes the reversible oxidation-reduction of methionine sulfoxide in proteins to methionine. The protein is Peptide methionine sulfoxide reductase MsrA of Streptococcus pyogenes serotype M6 (strain ATCC BAA-946 / MGAS10394).